Here is a 378-residue protein sequence, read N- to C-terminus: Acid phosphatase-like protein XcAP-2 (378 aa).

An N-terminal signal peptide occupies residues 1 to 19; that stretch reads MKTTILLLVVLTIVQLSKA. Disulfide bonds link C147-C374, C168-C220, and C347-C351.

This sequence belongs to the histidine acid phosphatase family.

It is found in the secreted. Probably modulates blood feeding of fleas on vertebrate species by binding and sequestering different mediators involved in the host response. Binds histamine. Binds leukotriene B4, leukotriene C4, leukotriene D4 and leukotriene E4. Does not bind serotonin, adrenaline, noradrenaline, ADP, and stable analogs of thromboxane A2: U-46619 and cTXA2. This is Acid phosphatase-like protein XcAP-2 from Xenopsylla cheopis (Oriental rat flea).